Reading from the N-terminus, the 37-residue chain is Large ribosomal subunit protein bL36 (37 aa).

Belongs to the bacterial ribosomal protein bL36 family.

The chain is Large ribosomal subunit protein bL36 from Caldicellulosiruptor saccharolyticus (strain ATCC 43494 / DSM 8903 / Tp8T 6331).